The following is a 222-amino-acid chain: Cytidylate kinase (222 aa).

ATP is bound at residue 10-18; it reads GPAGSGKSS.

It belongs to the cytidylate kinase family. Type 1 subfamily.

It localises to the cytoplasm. The enzyme catalyses CMP + ATP = CDP + ADP. The catalysed reaction is dCMP + ATP = dCDP + ADP. The chain is Cytidylate kinase from Acholeplasma laidlawii (strain PG-8A).